Reading from the N-terminus, the 131-residue chain is MIEVAEFIAREVKKGKVIEVGIGFYTRIAKRLKELGFDVLAIDINKDAVVNAKNSGLNAEVDDIFNPNISLYMGAKAIYSIRPTPEMMNYILKISKAVKVPAYIVPLTGDPVPQGMKLITYRGIPIYKWEP.

Belongs to the UPF0146 family.

The polypeptide is UPF0146 protein PYRAB01940 (Pyrococcus abyssi (strain GE5 / Orsay)).